The chain runs to 340 residues: S-adenosylmethionine:tRNA ribosyltransferase-isomerase (340 aa).

It belongs to the QueA family. As to quaternary structure, monomer.

The protein resides in the cytoplasm. The catalysed reaction is 7-aminomethyl-7-carbaguanosine(34) in tRNA + S-adenosyl-L-methionine = epoxyqueuosine(34) in tRNA + adenine + L-methionine + 2 H(+). It participates in tRNA modification; tRNA-queuosine biosynthesis. In terms of biological role, transfers and isomerizes the ribose moiety from AdoMet to the 7-aminomethyl group of 7-deazaguanine (preQ1-tRNA) to give epoxyqueuosine (oQ-tRNA). This chain is S-adenosylmethionine:tRNA ribosyltransferase-isomerase, found in Francisella tularensis subsp. holarctica (strain OSU18).